A 274-amino-acid polypeptide reads, in one-letter code: Karrikin insensitive 2 receptor IA (274 aa).

Residue serine 95 is the Nucleophile of the active site. Active-site residues include aspartate 217 and histidine 246.

It belongs to the AB hydrolase superfamily. In terms of assembly, interacts with MAX2A and MAX2B in the presence of (-)-germacrene D, thus forming an E3 SCF ubiquitin ligase complex (ASK-cullin-F-box) containing MAX2A or MAX2B and KAI2IA recognizing SMAX1A; this leads to the subsequent degradation of the transcriptional corepressor SMAX1A, thus triggering the activation of a downstream signaling cascade. As to expression, strongly expressed in stigma.

Its subcellular location is the nucleus. The protein resides in the cytoplasm. Its activity is regulated as follows. Hydrolysis activity toward yoshimulactone green (YLG), a fluorescent agonist to strigolactone receptor, is inhibited by (-)-germacrene D and GR24, a synthetic strigolactone analog. Hydrolase involved in the olfaction of sesquiterpene volatile organic compounds (VOCs) during volatile plant communication in a MAX2 proteins-dependent manner. Acts as a karrikin-insensitive receptor that stereospecifically perceives and binds to (-)-germacrene D, particularly in stigmas, and triggers a signaling cascade influencing plant fitness, as the result of reproductive organ growth-promoting effect; this process involves an interaction with MAX2 proteins (e.g. MAX2A and MAX2B) and the subsequent degradation of SMAX1a, a transcriptional corepressor. The sequence is that of Karrikin insensitive 2 receptor IA from Petunia hybrida (Petunia).